Reading from the N-terminus, the 256-residue chain is Hypodermin-A (256 aa).

Positions methionine 1–glycine 22 are cleaved as a signal peptide. Positions methionine 23–arginine 30 are cleaved as a propeptide — activation peptide. A Peptidase S1 domain is found at isoleucine 31–glutamate 254. Cysteines 56 and 72 form a disulfide. Catalysis depends on charge relay system residues histidine 71 and aspartate 116. 2 cysteine pairs are disulfide-bonded: cysteine 180–cysteine 197 and cysteine 206–cysteine 230. Serine 210 functions as the Charge relay system in the catalytic mechanism.

This sequence belongs to the peptidase S1 family.

It localises to the secreted. Its function is as follows. Specificity, limited to carboxyl side of arginine residue in B-chain of insulin. The chain is Hypodermin-A from Hypoderma lineatum (Early cattle grub).